The primary structure comprises 186 residues: ATP synthase subunit delta (186 aa).

This sequence belongs to the ATPase delta chain family. As to quaternary structure, F-type ATPases have 2 components, F(1) - the catalytic core - and F(0) - the membrane proton channel. F(1) has five subunits: alpha(3), beta(3), gamma(1), delta(1), epsilon(1). CF(0) has four main subunits: a(1), b(1), b'(1) and c(10-14). The alpha and beta chains form an alternating ring which encloses part of the gamma chain. F(1) is attached to F(0) by a central stalk formed by the gamma and epsilon chains, while a peripheral stalk is formed by the delta, b and b' chains.

Its subcellular location is the cell inner membrane. F(1)F(0) ATP synthase produces ATP from ADP in the presence of a proton or sodium gradient. F-type ATPases consist of two structural domains, F(1) containing the extramembraneous catalytic core and F(0) containing the membrane proton channel, linked together by a central stalk and a peripheral stalk. During catalysis, ATP synthesis in the catalytic domain of F(1) is coupled via a rotary mechanism of the central stalk subunits to proton translocation. Its function is as follows. This protein is part of the stalk that links CF(0) to CF(1). It either transmits conformational changes from CF(0) to CF(1) or is implicated in proton conduction. This Dinoroseobacter shibae (strain DSM 16493 / NCIMB 14021 / DFL 12) protein is ATP synthase subunit delta.